The primary structure comprises 1392 residues: DNA-directed RNA polymerase subunit beta (1392 aa).

This sequence belongs to the RNA polymerase beta chain family. The RNAP catalytic core consists of 2 alpha, 1 beta, 1 beta' and 1 omega subunit. When a sigma factor is associated with the core the holoenzyme is formed, which can initiate transcription.

The enzyme catalyses RNA(n) + a ribonucleoside 5'-triphosphate = RNA(n+1) + diphosphate. Functionally, DNA-dependent RNA polymerase catalyzes the transcription of DNA into RNA using the four ribonucleoside triphosphates as substrates. This chain is DNA-directed RNA polymerase subunit beta, found in Neisseria gonorrhoeae (strain ATCC 700825 / FA 1090).